The sequence spans 513 residues: GMP synthase [glutamine-hydrolyzing] (513 aa).

One can recognise a Glutamine amidotransferase type-1 domain in the interval 9–198; sequence LILVLDFGSQ…IREICKCTGE (190 aa). Residue Cys86 is the Nucleophile of the active site. Catalysis depends on residues His172 and Glu174. Positions 199-388 constitute a GMPS ATP-PPase domain; it reads WTMENFIEIE…LGIPEHLVWR (190 aa). 226–232 is an ATP binding site; sequence SGGVDSS.

In terms of assembly, homodimer.

The catalysed reaction is XMP + L-glutamine + ATP + H2O = GMP + L-glutamate + AMP + diphosphate + 2 H(+). The protein operates within purine metabolism; GMP biosynthesis; GMP from XMP (L-Gln route): step 1/1. In terms of biological role, catalyzes the synthesis of GMP from XMP. This chain is GMP synthase [glutamine-hydrolyzing], found in Macrococcus caseolyticus (strain JCSC5402) (Macrococcoides caseolyticum).